The following is a 347-amino-acid chain: Hydroxymethylglutaryl-CoA synthase (347 aa).

(3S)-3-hydroxy-3-methylglutaryl-CoA contacts are provided by aspartate 29 and alanine 30. The active-site Proton donor/acceptor is the glutamate 80. Cysteine 112 and threonine 153 together coordinate (3S)-3-hydroxy-3-methylglutaryl-CoA. The active-site Acyl-thioester intermediate is the cysteine 112. Position 199 (arginine 199) interacts with CoA. Residues threonine 201 and histidine 234 each contribute to the (3S)-3-hydroxy-3-methylglutaryl-CoA site. Histidine 234 acts as the Proton donor/acceptor in catalysis. Lysine 239 is a binding site for CoA. (3S)-3-hydroxy-3-methylglutaryl-CoA contacts are provided by arginine 243, asparagine 266, and serine 296.

The protein belongs to the thiolase-like superfamily. Archaeal HMG-CoA synthase family. In terms of assembly, interacts with acetoacetyl-CoA thiolase that catalyzes the precedent step in the pathway and with a DUF35 protein. The acetoacetyl-CoA thiolase/HMG-CoA synthase complex channels the intermediate via a fused CoA-binding site, which allows for efficient coupling of the endergonic thiolase reaction with the exergonic HMGCS reaction.

It catalyses the reaction acetoacetyl-CoA + acetyl-CoA + H2O = (3S)-3-hydroxy-3-methylglutaryl-CoA + CoA + H(+). Its pathway is metabolic intermediate biosynthesis; (R)-mevalonate biosynthesis; (R)-mevalonate from acetyl-CoA: step 2/3. Catalyzes the condensation of acetyl-CoA with acetoacetyl-CoA to form 3-hydroxy-3-methylglutaryl-CoA (HMG-CoA). Functions in the mevalonate (MVA) pathway leading to isopentenyl diphosphate (IPP), a key precursor for the biosynthesis of isoprenoid compounds that are building blocks of archaeal membrane lipids. The protein is Hydroxymethylglutaryl-CoA synthase of Methanocella arvoryzae (strain DSM 22066 / NBRC 105507 / MRE50).